The primary structure comprises 153 residues: Acetylacetone-cleaving enzyme (153 aa).

Homotetramer. Fe cation is required as a cofactor.

It carries out the reaction acetylacetone + O2 = methylglyoxal + acetate + H(+). It participates in xenobiotic degradation; acetylacetone degradation. Its function is as follows. Cleaves acetylacetone to equimolar amounts of methylglyoxal and acetate, consuming one equivalent of molecular oxygen. The polypeptide is Acetylacetone-cleaving enzyme (dke1) (Acinetobacter johnsonii).